A 124-amino-acid polypeptide reads, in one-letter code: Small ribosomal subunit protein uS12 (124 aa).

Asp-89 bears the 3-methylthioaspartic acid mark. Residues 104–124 (SAGVQNRNRGRSKYGTKRPKK) are disordered. Basic residues predominate over residues 111–124 (NRGRSKYGTKRPKK).

It belongs to the universal ribosomal protein uS12 family. As to quaternary structure, part of the 30S ribosomal subunit. Contacts proteins S8 and S17. May interact with IF1 in the 30S initiation complex.

With S4 and S5 plays an important role in translational accuracy. Functionally, interacts with and stabilizes bases of the 16S rRNA that are involved in tRNA selection in the A site and with the mRNA backbone. Located at the interface of the 30S and 50S subunits, it traverses the body of the 30S subunit contacting proteins on the other side and probably holding the rRNA structure together. The combined cluster of proteins S8, S12 and S17 appears to hold together the shoulder and platform of the 30S subunit. In Desulforamulus reducens (strain ATCC BAA-1160 / DSM 100696 / MI-1) (Desulfotomaculum reducens), this protein is Small ribosomal subunit protein uS12.